The primary structure comprises 247 residues: Granzyme B(G,H) (247 aa).

The signal sequence occupies residues 1–18; that stretch reads MKILLLLLTLSLASRTKA. A propeptide spans 19 to 20 (activation peptide); it reads GE. The Peptidase S1 domain maps to 21–245; sequence IIGGHEVKPH…FLSWIKKTMK (225 aa). Cys49 and Cys65 are disulfide-bonded. His64 acts as the Charge relay system in catalysis. A glycan (N-linked (GlcNAc...) asparagine) is linked at Asn71. Asp108 (charge relay system) is an active-site residue. 2 disulfide bridges follow: Cys142–Cys209 and Cys173–Cys188. N-linked (GlcNAc...) asparagine glycosylation is present at Asn182. The Charge relay system role is filled by Ser203.

Belongs to the peptidase S1 family. Granzyme subfamily.

The protein localises to the secreted. The protein resides in the cytolytic granule. It carries out the reaction Preferential cleavage: -Asp-|-Xaa- &gt;&gt; -Asn-|-Xaa- &gt; -Met-|-Xaa-, -Ser-|-Xaa-.. With respect to regulation, inactivated by the serine protease inhibitor diisopropylfluorophosphate. Its function is as follows. Abundant protease in the cytosolic granules of cytotoxic T-cells and NK-cells which activates caspase-independent pyroptosis when delivered into the target cell through the immunological synapse. It cleaves after Asp. Once delivered into the target cell, acts by catalyzing cleavage of gasdermin-E (GSDME), releasing the pore-forming moiety of GSDME, thereby triggering pyroptosis and target cell death. Seems to be linked to an activation cascade of caspases (aspartate-specific cysteine proteases) responsible for apoptosis execution. Cleaves caspase-3 and -9 (CASP3 and CASP9, respectively) to give rise to active enzymes mediating apoptosis. Cleaves and activates CASP7 in response to bacterial infection, promoting plasma membrane repair. This chain is Granzyme B(G,H) (Gzmb), found in Mus musculus (Mouse).